A 570-amino-acid polypeptide reads, in one-letter code: Alpha-1,2-mannosyltransferase ALG9 (570 aa).

The segment at methionine 1–glycine 37 is disordered. Positions serine 14–tyrosine 25 are enriched in low complexity. The next 8 membrane-spanning stretches (helical) occupy residues alanine 129–leucine 149, tyrosine 160–proline 180, valine 208–tyrosine 228, alanine 237–tyrosine 257, phenylalanine 297–isoleucine 317, alanine 324–histidine 344, phenylalanine 349–proline 369, and serine 381–alanine 401. An N-linked (GlcNAc...) asparagine glycan is attached at asparagine 473.

Belongs to the glycosyltransferase 22 family.

The protein resides in the endoplasmic reticulum membrane. It catalyses the reaction an alpha-D-Man-(1-&gt;2)-alpha-D-Man-(1-&gt;2)-alpha-D-Man-(1-&gt;3)-[alpha-D-Man-(1-&gt;3)-alpha-D-Man-(1-&gt;6)]-beta-D-Man-(1-&gt;4)-beta-D-GlcNAc-(1-&gt;4)-alpha-D-GlcNAc-diphospho-di-trans,poly-cis-dolichol + a di-trans,poly-cis-dolichyl beta-D-mannosyl phosphate = an alpha-D-Man-(1-&gt;2)-alpha-D-Man-(1-&gt;2)-alpha-D-Man-(1-&gt;3)-[alpha-D-Man-(1-&gt;2)-alpha-D-Man-(1-&gt;3)-alpha-D-Man-(1-&gt;6)]-beta-D-Man-(1-&gt;4)-beta-D-GlcNAc-(1-&gt;4)-alpha-D-GlcNAc-diphospho-di-trans,poly-cis-dolichol + a di-trans,poly-cis-dolichyl phosphate + H(+). The catalysed reaction is an alpha-D-Man-(1-&gt;2)-alpha-D-Man-(1-&gt;2)-alpha-D-Man-(1-&gt;3)-[alpha-D-Man-(1-&gt;2)-alpha-D-Man-(1-&gt;3)-[alpha-D-Man-(1-&gt;6)]-alpha-D-Man-(1-&gt;6)]-beta-D-Man-(1-&gt;4)-beta-D-GlcNAc-(1-&gt;4)-alpha-D-GlcNAc-diphospho-di-trans,poly-cis-dolichol + a di-trans,poly-cis-dolichyl beta-D-mannosyl phosphate = an alpha-D-Man-(1-&gt;2)-alpha-D-Man-(1-&gt;2)-alpha-D-Man-(1-&gt;3)-[alpha-D-Man-(1-&gt;2)-alpha-D-Man-(1-&gt;3)-[alpha-D-Man-(1-&gt;2)-alpha-D-Man-(1-&gt;6)]-alpha-D-Man-(1-&gt;6)]-beta-D-Man-(1-&gt;4)-beta-D-GlcNAc-(1-&gt;4)-alpha-D-GlcNAc-diphospho-di-trans,poly-cis-dolichol + a di-trans,poly-cis-dolichyl phosphate + H(+). Its pathway is protein modification; protein glycosylation. Functionally, mannosyltransferase that operates in the biosynthetic pathway of dolichol-linked oligosaccharides, the glycan precursors employed in protein asparagine (N)-glycosylation. The assembly of dolichol-linked oligosaccharides begins on the cytosolic side of the endoplasmic reticulum membrane and finishes in its lumen. The sequential addition of sugars to dolichol pyrophosphate produces dolichol-linked oligosaccharides containing fourteen sugars, including two GlcNAcs, nine mannoses and three glucoses. Once assembled, the oligosaccharide is transferred from the lipid to nascent proteins by oligosaccharyltransferases. In the lumen of the endoplasmic reticulum, catalyzes the addition of the seventh and ninth alpha-1,2-linked mannose residues to Man(6)GlcNAc(2)-PP-dolichol and Man(8)GlcNAc(2)-PP-dolichol respectively. This Arabidopsis thaliana (Mouse-ear cress) protein is Alpha-1,2-mannosyltransferase ALG9 (ALG9).